A 372-amino-acid polypeptide reads, in one-letter code: DNA replication and repair protein RecF (372 aa).

An ATP-binding site is contributed by 30–37 (GENAQGKT).

Belongs to the RecF family.

It localises to the cytoplasm. Functionally, the RecF protein is involved in DNA metabolism; it is required for DNA replication and normal SOS inducibility. RecF binds preferentially to single-stranded, linear DNA. It also seems to bind ATP. This is DNA replication and repair protein RecF from Geobacillus kaustophilus (strain HTA426).